The primary structure comprises 204 residues: Somatotropin (204 aa).

A signal peptide spans Met-1–Ser-17. Pyrrolidone carboxylic acid is present on Gln-18. 2 disulfide bridges follow: Cys-69–Cys-177 and Cys-194–Cys-202.

It belongs to the somatotropin/prolactin family.

The protein resides in the secreted. Growth hormone plays an important role in growth control and is involved in the regulation of several anabolic processes. Implicated as an osmoregulatory substance important for seawater adaptation. The sequence is that of Somatotropin (gh) from Seriola quinqueradiata (Five-ray yellowtail).